Consider the following 462-residue polypeptide: Protein phosphatase 1M (462 aa).

The segment covering 1–10 has biased composition (basic residues); that stretch reads MSAGWFRRRF. Residues 1–66 are disordered; it reads MSAGWFRRRF…PVRSPARGRT (66 aa). The PPM-type phosphatase domain occupies 100–452; that stretch reads EFGIEEDQEW…DDVSVFVIPL (353 aa). Asp127 and Gly128 together coordinate Mn(2+).

Belongs to the PP2C family. Requires Mg(2+) as cofactor. Mn(2+) is required as a cofactor. As to expression, widely expressed with highest levels in testis and lower levels in lung, kidney and brain.

The protein resides in the nucleus. The enzyme catalyses O-phospho-L-seryl-[protein] + H2O = L-seryl-[protein] + phosphate. It carries out the reaction O-phospho-L-threonyl-[protein] + H2O = L-threonyl-[protein] + phosphate. This is Protein phosphatase 1M from Mus musculus (Mouse).